We begin with the raw amino-acid sequence, 636 residues long: MDNRGHFSSNGNFPPQGYHRREQSQEGMRIGNHHGPFSSGNMRSIGGSAQNQQQRHWTNMLNGSNNVENSWVCFSGNTSLADDPNVLSNFSALAQQRVNHFDTIVQERDNRNASFLNGSAVGNNLNTSFSVFGNLRGGDQDHRVLSDHTGIYTGLGSTGQNAVGTGIRLAADVANGNFLEQRAPTAMGHNQSYSALNQSLAPTLLDQYNQALLDQYNQSSQMAQGRGYPAPNIAYGLQNAGFPAPQIAHRPNTQNADPQAMNMNNRLRDHTFQMPHTNAQVPMSSLPGLFNLSMNHGSGNQQFQMNQSSSGPAPQLPNLSESFQMAQGSSQVTMSSRPAHSNTSMNHSSRNQYNHVDQRPSRPAPHLPTLTKEEEAFLETPDFEQFGRQLYNYLLPGILPNGAADTFSDAPKHQLLKLAKTLKPMLYDYWRKTMQMQNRGANINIIQWIIDFNAKFAALNSSVAKASNSSDVLNQTLPTAAEVSDVAREDASTSQPSKSRSMYIRPAASLDNTLETLDENLDSSQSHAGPVPAASTKPKTPSFEKMIRYSGIKKRSTMDMDNFVRMLDEKINFSPEPSTSSDIASSVKGYMSQSFLHQQDDEAPDCTKNVHSESDLKQAEPQESDKQSDKELPSNE.

Composition is skewed to polar residues over residues 1–13 (MDNRGHFSSNGNF), 38–54 (SSGNMRSIGGSAQNQQQ), and 292–355 (LSMN…QYNH). 4 disordered regions span residues 1–54 (MDNR…NQQQ), 289–367 (LFNL…APHL), 484–504 (SDVAREDASTSQPSKSRSMYI), and 521–542 (LDSSQSHAGPVPAASTKPKTPS). Position 574 is a phosphoserine; by mbk-2 (Ser-574). The disordered stretch occupies residues 591 to 636 (MSQSFLHQQDDEAPDCTKNVHSESDLKQAEPQESDKQSDKELPSNE). Residues 608-636 (KNVHSESDLKQAEPQESDKQSDKELPSNE) show a composition bias toward basic and acidic residues.

As to quaternary structure, interacts with pptr-1, pptr-2 and pgl-1. Post-translationally, phosphorylated by mbk-2, which promotes the disassembly of zygotic P granules in the anterior cytoplasm of pre-gastrulation embryos. Dephosphorylated by a phosphatase complex containing the PP2A regulatory subunit pptr-1, which promotes the assembly and accumulation of zygotic P granules in the posterior cytoplasm of pre-gastrulation embryos. As to expression, not expressed in the adult germline or in any somatic tissues.

It is found in the cytoplasmic granule. P granule component, which acts redundantly with P granule component meg-2 to promote P granule segregation during embryogenesis, and germ cell proliferation and differentiation in larval stages. In its phosphorylated form, and together with meg-2, promotes the disassembly of zygotic P granules in the anterior cytoplasm of pre-gastrulation embryos. In its dephosphorylated form, and together with meg-2, promotes the assembly and accumulation of zygotic P granules in the posterior cytoplasm of pre-gastrulation embryos. May function with the nanos family members nos-2 and nos-3 to promote germ cell proliferation during larval development. Required for fertility. This is Protein meg-1 from Caenorhabditis elegans.